Reading from the N-terminus, the 432-residue chain is MRVVILGSGVVGVASAWYLNQAGHEVTVIDREPGAALETSAANAGQISPGYAAPWAAPGVPLKAIKWMFQRHAPLAVRLDGTQFQLKWMWQMLRNCDTSHYMENKGRMVRLAEYSRDCLKALRAETNIQYEGRQGGTLQLFRTEQQYENATRDIAVLEDAGVPYQLLESSRLAEVDPALAEVAHKLTGGLQLPNDETGDCQLFTQNLARMAEQAGVKFRFNTPVDQLLCDGEQIYGVKFGDEVIKADAYVMAFGSYSTAMLKGIVDIPVYPLKGYSLTIPIAQEDGAPVSTILDETYKIAITRFDNRIRVGGMAEIVGFNTELLQPRRETLEMVVRDLYPRGGHVEQATFWTGLRPMTPDGTPVVGSTRFKNLWLNTGHGTLGWTMACGSGQLLSDLLSGRTPAIPYEDLSVARYSRGFTPSRPGHLHGAHS.

3–17 (VVILGSGVVGVASAW) contacts FAD.

The protein belongs to the DadA oxidoreductase family. FAD serves as cofactor.

It carries out the reaction a D-alpha-amino acid + A + H2O = a 2-oxocarboxylate + AH2 + NH4(+). The protein operates within amino-acid degradation; D-alanine degradation; NH(3) and pyruvate from D-alanine: step 1/1. Oxidative deamination of D-amino acids. The polypeptide is D-amino acid dehydrogenase (Shigella boydii serotype 4 (strain Sb227)).